The primary structure comprises 142 residues: Augurin-A (142 aa).

The first 28 residues, 1 to 28, serve as a signal peptide directing secretion; it reads MLSEKFHLRLLTLLTLLTALSLTDVASE. 2 consecutive propeptides follow at residues 29–66 and 127–142; these read SKLE…LKRP and GAAS…YDYY.

It belongs to the augurin family.

It localises to the secreted. Its subcellular location is the cytoplasm. The protein localises to the apical cell membrane. Probable hormone. Required for the proper formation of the central nervous system by attenuating cell proliferation during development. The chain is Augurin-A from Danio rerio (Zebrafish).